We begin with the raw amino-acid sequence, 179 residues long: Endoribonuclease YbeY (179 aa).

Positions 141, 145, and 151 each coordinate Zn(2+).

Belongs to the endoribonuclease YbeY family. The cofactor is Zn(2+).

The protein localises to the cytoplasm. Its function is as follows. Single strand-specific metallo-endoribonuclease involved in late-stage 70S ribosome quality control and in maturation of the 3' terminus of the 16S rRNA. The sequence is that of Endoribonuclease YbeY from Synechocystis sp. (strain ATCC 27184 / PCC 6803 / Kazusa).